Reading from the N-terminus, the 265-residue chain is Palmitoyltransferase ZDHHC21 (265 aa).

The Cytoplasmic portion of the chain corresponds to 1–16 (MGLRIHFVVDPHGWCC). A helical transmembrane segment spans residues 17 to 37 (MGLIVFVWLYNIVIIPKIVLF). Topologically, residues 38 to 44 (PHYEEGH) are extracellular. A helical membrane pass occupies residues 45–65 (IPGILIIIFYGISIFCLVALV). The Cytoplasmic portion of the chain corresponds to 66–133 (RASLTDPGRL…NNCVGEDNHW (68 aa)). The DHHC domain occupies 90 to 140 (ELCNKCNLMRPKRSHHCSRCGHCVRRMDHHCPWINNCVGEDNHWLFLQLCF). The active-site S-palmitoyl cysteine intermediate is the C120. A helical transmembrane segment spans residues 134 to 154 (LFLQLCFYTELLTCYALMFSF). The Extracellular segment spans residues 155-185 (CHYYYFLPLKKRNLDLFVVRHELAIMRLAAF). Residues 186–206 (MGITMLVGITGLFYTQLIGII) traverse the membrane as a helical segment. The Cytoplasmic portion of the chain corresponds to 207–265 (TDTTSIEKMSNCCEEISRPRKPWQQTFSEVFGTRWKILWFIPFRQRQPLRVPYHFANHV).

The protein belongs to the DHHC palmitoyltransferase family. Widely expressed. Expressed in Henle's layer within the hair bulb and the hair shaft cuticle (at protein level). Expression is limited to the post-mitotic lineages of inner root sheath (IRS) and cuticle.

The protein localises to the golgi apparatus membrane. It is found in the golgi apparatus. Its subcellular location is the cis-Golgi network membrane. It localises to the cell membrane. The enzyme catalyses L-cysteinyl-[protein] + hexadecanoyl-CoA = S-hexadecanoyl-L-cysteinyl-[protein] + CoA. Functionally, palmitoyltransferase that catalyzes the addition of palmitate onto various protein substrates. Palmitoylates sex steroid hormone receptors, including ESR1, PGR and AR, thereby regulating their targeting to the plasma membrane. This affects rapid intracellular signaling by sex hormones via ERK and AKT kinases and the generation of cAMP, but does not affect that mediated by their nuclear receptor. Palmitoylates FYN, regulates its localization in hair follicles and plays a key role in epidermal homeostasis and hair follicle differentiation. Through the palmitoylation of PLCB1 and the regulation of PLCB1 downstream signaling may indirectly regulate the function of the endothelial barrier and the adhesion of leukocytes to the endothelium. Also has a palmitoyltransferase activity toward ADRA1D, positively regulating its activity and expression and may thereby play a role in vascular contraction. May also palmitoylate eNOS and LCK. This chain is Palmitoyltransferase ZDHHC21, found in Mus musculus (Mouse).